The sequence spans 363 residues: Trichocyst matrix protein T4-A (363 aa).

The N-terminal stretch at 1 to 17 is a signal peptide; that stretch reads MARSLTILAIVFAVATA. Residues 18–52 constitute a propeptide that is removed on maturation; the sequence is RVTKSESPKEILAQVNKDSFGNSILSVLQLQLATG. Residues 85–119 adopt a coiled-coil conformation; it reads VAFEKIIADLEQEIAYHQTQIVALSNLRDSTTEAL. Positions 190–221 are excised as a propeptide; that stretch reads RFEKVQAKLMESKHALFKPLINALTQLASKVD. A coiled-coil region spans residues 244–352; that stretch reads ASLLATEERQ…EVLTQKLSAA (109 aa).

This sequence belongs to the TMP family. Two components are produced by post-translational processing from the precursor peptide.

Its subcellular location is the trichocyst. Structural protein that crystallize inside the trichocyst matrix. This Paramecium tetraurelia protein is Trichocyst matrix protein T4-A (T4A).